The primary structure comprises 169 residues: Menaquinol:cytochrome c reductase iron-sulfur subunit (169 aa).

A Rieske domain is found at 62-160 (EPKRFDFKVK…FEVKDGKLYL (99 aa)). [2Fe-2S] cluster is bound by residues C102, H104, C123, and H126. The cysteines at positions 107 and 125 are disulfide-linked.

The protein belongs to the Rieske iron-sulfur protein family. The main subunits of the menaquinol:cytochrome c complex are a Rieske-type iron-sulfur protein (QcrA), a cytochrome b (QcrB) and a cytochrome c (QcrC). [2Fe-2S] cluster is required as a cofactor.

Functionally, component of the menaquinol:cytochrome c reductase complex. The Rieske protein is a high potential 2Fe-2S protein. The polypeptide is Menaquinol:cytochrome c reductase iron-sulfur subunit (qcrA) (Geobacillus thermodenitrificans).